We begin with the raw amino-acid sequence, 425 residues long: Serine--tRNA ligase (425 aa).

Residue 232-234 (TSE) coordinates L-serine. ATP is bound by residues 263–265 (RRE) and valine 279. Glutamate 286 serves as a coordination point for L-serine. 350-353 (EVVS) serves as a coordination point for ATP. Threonine 387 lines the L-serine pocket.

It belongs to the class-II aminoacyl-tRNA synthetase family. Type-1 seryl-tRNA synthetase subfamily. Homodimer. The tRNA molecule binds across the dimer.

It localises to the cytoplasm. The enzyme catalyses tRNA(Ser) + L-serine + ATP = L-seryl-tRNA(Ser) + AMP + diphosphate + H(+). It catalyses the reaction tRNA(Sec) + L-serine + ATP = L-seryl-tRNA(Sec) + AMP + diphosphate + H(+). Its pathway is aminoacyl-tRNA biosynthesis; selenocysteinyl-tRNA(Sec) biosynthesis; L-seryl-tRNA(Sec) from L-serine and tRNA(Sec): step 1/1. Its function is as follows. Catalyzes the attachment of serine to tRNA(Ser). Is also able to aminoacylate tRNA(Sec) with serine, to form the misacylated tRNA L-seryl-tRNA(Sec), which will be further converted into selenocysteinyl-tRNA(Sec). The chain is Serine--tRNA ligase from Methanospirillum hungatei JF-1 (strain ATCC 27890 / DSM 864 / NBRC 100397 / JF-1).